Here is a 175-residue protein sequence, read N- to C-terminus: Lactobacillus up-regulated protein (175 aa).

A signal peptide spans M1–A18. Residue N59 is glycosylated (N-linked (GlcNAc...) asparagine).

The polypeptide is Lactobacillus up-regulated protein (lbuA) (Emericella nidulans (strain FGSC A4 / ATCC 38163 / CBS 112.46 / NRRL 194 / M139) (Aspergillus nidulans)).